The sequence spans 173 residues: Photosystem I assembly protein Ycf3 (173 aa).

TPR repeat units lie at residues alanine 35 to proline 68, glycine 72 to glutamine 105, and glycine 120 to glycine 153.

The protein belongs to the Ycf3 family.

The protein resides in the cellular thylakoid membrane. Its function is as follows. Essential for the assembly of the photosystem I (PSI) complex. May act as a chaperone-like factor to guide the assembly of the PSI subunits. This chain is Photosystem I assembly protein Ycf3, found in Prochlorococcus marinus (strain MIT 9211).